A 429-amino-acid polypeptide reads, in one-letter code: Adenylosuccinate synthetase (429 aa).

GTP-binding positions include 12 to 18 (GDEGKGK) and 40 to 42 (GHT). The active-site Proton acceptor is the aspartate 13. Residues aspartate 13 and glycine 40 each contribute to the Mg(2+) site. IMP is bound by residues 13-16 (DEGK), 38-41 (NAGH), threonine 129, arginine 143, glutamine 223, threonine 238, and arginine 302. The active-site Proton donor is the histidine 41. Substrate is bound at residue 298-304 (TVTGRAR). GTP is bound by residues arginine 304, 330–332 (KLD), and 412–414 (STS).

The protein belongs to the adenylosuccinate synthetase family. In terms of assembly, homodimer. Requires Mg(2+) as cofactor.

The protein resides in the cytoplasm. The catalysed reaction is IMP + L-aspartate + GTP = N(6)-(1,2-dicarboxyethyl)-AMP + GDP + phosphate + 2 H(+). Its pathway is purine metabolism; AMP biosynthesis via de novo pathway; AMP from IMP: step 1/2. Functionally, plays an important role in the de novo pathway of purine nucleotide biosynthesis. Catalyzes the first committed step in the biosynthesis of AMP from IMP. The chain is Adenylosuccinate synthetase from Acidiphilium cryptum (strain JF-5).